The chain runs to 394 residues: Elongation factor Tu (394 aa).

A tr-type G domain is found at 10–204 (KPHVNIGTIG…AVDSYIPQPV (195 aa)). The interval 19 to 26 (GHVDHGKT) is G1. GTP is bound at residue 19–26 (GHVDHGKT). Threonine 26 contacts Mg(2+). The interval 60–64 (GITIS) is G2. The G3 stretch occupies residues 81–84 (DCPG). Residues 81–85 (DCPGH) and 136–139 (NKVD) each bind GTP. A G4 region spans residues 136–139 (NKVD). Positions 174–176 (SAL) are G5.

The protein belongs to the TRAFAC class translation factor GTPase superfamily. Classic translation factor GTPase family. EF-Tu/EF-1A subfamily. Monomer.

The protein localises to the cytoplasm. It carries out the reaction GTP + H2O = GDP + phosphate + H(+). Its function is as follows. GTP hydrolase that promotes the GTP-dependent binding of aminoacyl-tRNA to the A-site of ribosomes during protein biosynthesis. In Rickettsia rhipicephali, this protein is Elongation factor Tu.